The primary structure comprises 383 residues: Putative [LysW]-aminoadipate semialdehyde/glutamate semialdehyde transaminase (383 aa).

Residues 97–98 and Phe-124 contribute to the pyridoxal 5'-phosphate site; that span reads GT. Arg-127 provides a ligand contact to substrate. Residue 209–212 participates in pyridoxal 5'-phosphate binding; it reads DEVQ. Position 238 is an N6-(pyridoxal phosphate)lysine (Lys-238). A substrate-binding site is contributed by Ser-266. Residue Thr-267 participates in pyridoxal 5'-phosphate binding.

The protein belongs to the class-III pyridoxal-phosphate-dependent aminotransferase family. LysJ subfamily. Homodimer. Pyridoxal 5'-phosphate is required as a cofactor.

Its subcellular location is the cytoplasm. The catalysed reaction is [amino-group carrier protein]-C-terminal-gamma-(L-lysyl)-L-glutamate + 2-oxoglutarate = [amino-group carrier protein]-C-terminal-N-(1-carboxy-5-oxopentan-1-yl)-L-glutamine + L-glutamate. It catalyses the reaction [amino-group carrier protein]-C-terminal-gamma-(L-ornithyl)-L-glutamate + 2-oxoglutarate = [amino-group carrier protein]-C-terminal-gamma-(L-glutamyl-5-semialdehyde)-L-glutamate + L-glutamate. The protein operates within amino-acid biosynthesis; L-lysine biosynthesis via AAA pathway; L-lysine from L-alpha-aminoadipate (Thermus route): step 4/5. It functions in the pathway amino-acid biosynthesis; L-arginine biosynthesis. Functionally, involved in both the arginine and lysine biosynthetic pathways. The polypeptide is Putative [LysW]-aminoadipate semialdehyde/glutamate semialdehyde transaminase (Pyrobaculum aerophilum (strain ATCC 51768 / DSM 7523 / JCM 9630 / CIP 104966 / NBRC 100827 / IM2)).